The following is a 416-amino-acid chain: tRNA(Met) cytidine acetate ligase (416 aa).

Residues 7-20 (VVEY…HLYH), glycine 101, asparagine 163, and arginine 188 each bind ATP.

The protein belongs to the TmcAL family.

The protein localises to the cytoplasm. The enzyme catalyses cytidine(34) in elongator tRNA(Met) + acetate + ATP = N(4)-acetylcytidine(34) in elongator tRNA(Met) + AMP + diphosphate. Its function is as follows. Catalyzes the formation of N(4)-acetylcytidine (ac(4)C) at the wobble position of elongator tRNA(Met), using acetate and ATP as substrates. First activates an acetate ion to form acetyladenylate (Ac-AMP) and then transfers the acetyl group to tRNA to form ac(4)C34. The sequence is that of tRNA(Met) cytidine acetate ligase from Bacillus licheniformis (strain ATCC 14580 / DSM 13 / JCM 2505 / CCUG 7422 / NBRC 12200 / NCIMB 9375 / NCTC 10341 / NRRL NRS-1264 / Gibson 46).